The chain runs to 212 residues: Probable GTP-binding protein EngB (212 aa).

The region spanning 38–210 (SLPEIAFVGK…KASLAKCIKF (173 aa)) is the EngB-type G domain. Residues 46–53 (GKSNVGKS), 73–77 (GRTRQ), 91–94 (DLPG), 158–161 (TKSD), and 189–191 (VSN) each bind GTP. Mg(2+) is bound by residues Ser-53 and Thr-75.

This sequence belongs to the TRAFAC class TrmE-Era-EngA-EngB-Septin-like GTPase superfamily. EngB GTPase family. Mg(2+) serves as cofactor.

Necessary for normal cell division and for the maintenance of normal septation. This is Probable GTP-binding protein EngB from Rickettsia rickettsii (strain Sheila Smith).